The following is a 1388-amino-acid chain: Retrotransposon Gag-like protein 9 (1388 aa).

Disordered regions lie at residues 491 to 511 (ATAS…GAMS), 769 to 790 (TPLM…ASSS), 895 to 918 (GGVS…RRPS), 1100 to 1138 (TDSG…PKEV), and 1336 to 1388 (AMGN…HTNK). Residues 1103–1123 (GEASTSHINITASGSKPTSHM) show a composition bias toward polar residues. Positions 1359 to 1374 (YLKEHGDPQEGLHDHL) are enriched in basic and acidic residues.

The protein is Retrotransposon Gag-like protein 9 of Homo sapiens (Human).